Reading from the N-terminus, the 425-residue chain is (S)-6-hydroxynicotine oxidase (425 aa).

FAD contacts are provided by residues serine 12, glutamate 31, 38 to 39 (GR), and 56 to 59 (GGAY). Asparagine 166 serves as a coordination point for (S)-6-hydroxynicotine. FAD is bound at residue valine 226. Positions 311, 326, and 371 each coordinate (S)-6-hydroxynicotine. FAD contacts are provided by residues serine 398 and 406–408 (GYI). Tyrosine 407 serves as a coordination point for (S)-6-hydroxynicotine.

The protein belongs to the flavin monoamine oxidase family. In terms of assembly, homodimer. It depends on FAD as a cofactor.

The protein localises to the cytoplasm. It carries out the reaction (S)-6-hydroxynicotine + O2 + H2O = 6-hydroxypseudooxynicotine + H2O2. The enzyme catalyses (S)-6-hydroxynicotine + O2 = 6-hydroxy-N-methylmyosmine + H2O2. The protein operates within alkaloid degradation; nicotine degradation; 6-hydroxypseudooxynicotine from nicotine (S-isomer route): step 2/2. With respect to regulation, inhibited by (R)-6-hydroxynicotine. Inhibited by high concentrations of phenanthroline. Activity is strongly affected by Hg(2+) and p-chloromercuriphenylsulfonate, but not by N-ethylmaleimide and 5,5'-dithiobis-(2-nitrobenzoate). Involved in the degradation of L-nicotine. Catalyzes the oxidation of (S)-6-hydroxynicotine (6-hydroxy-L-nicotine) to 6-hydroxypseudooxynicotine. Oxidation of the pyrrolidine ring of (S)-6-hydroxynicotine leads to the formation of the optically inactive 6-hydroxy-N-methylmyosmine, which hydrolyzes spontaneously to 6-hydroxypseudooxynicotine. Acts with absolute stereospecificity on the L-form of 6-hydroxynicotine. Can also use (S)-6-hydroxynornicotine. The sequence is that of (S)-6-hydroxynicotine oxidase from Paenarthrobacter nicotinovorans (Arthrobacter nicotinovorans).